Consider the following 239-residue polypeptide: UPF0173 metal-dependent hydrolase DVU_3308 (239 aa).

The protein belongs to the UPF0173 family.

In Nitratidesulfovibrio vulgaris (strain ATCC 29579 / DSM 644 / CCUG 34227 / NCIMB 8303 / VKM B-1760 / Hildenborough) (Desulfovibrio vulgaris), this protein is UPF0173 metal-dependent hydrolase DVU_3308.